The following is a 375-amino-acid chain: Nucleosome assembly protein 1-like 4 (375 aa).

The disordered stretch occupies residues 1–28; it reads MAENSLSDGGPADSVEAAKNASNTEKLT. Alanine 2 carries the N-acetylalanine modification. Serine 5, serine 7, and serine 49 each carry phosphoserine. Threonine 51 carries the post-translational modification Phosphothreonine. 2 positions are modified to phosphoserine: serine 53 and serine 54. Position 58 is a phosphothreonine (threonine 58). Residue lysine 105 is modified to N6-acetyllysine. A Phosphoserine modification is found at serine 125. N6-acetyllysine is present on lysine 146. The short motif at 265–271 is the Nuclear localization signal element; it reads IKKKQKH. At serine 304 the chain carries Phosphoserine. Positions 339–375 are disordered; it reads AIEDDDNFEEGEEGEEEELEGDEEGEDEDDADVNPKV.

Belongs to the nucleosome assembly protein (NAP) family. As to quaternary structure, interacts with core (H2A, H2B, H3, H4) and linker (H1) histones. Post-translationally, polyglutamylated and polyglycylated. These 2 modifications occur exclusively on glutamate residues and result in either polyglutamate or polyglycine chains on the gamma-carboxyl group. Both modifications can coexist on the same protein on adjacent residues, and lowering polyglycylation levels increases polyglutamylation, and reciprocally. Polyglutamylated by TTLL4. Phosphorylated at the G0/G1 boundary but it is not phosphorylated in S-phase. Phosphorylated protein remains in the cytoplasm in a complex with histones during the G0/G1 transition, whereas dephosphorylation triggers its transport into the nucleus at the G1/S-boundary.

The protein localises to the nucleus. Its subcellular location is the cytoplasm. Its function is as follows. Acts as a histone chaperone in nucleosome assembly. In condensing spermatids, mediates the loading of the heterodimer composed of histones H2AB1 and H2BC1/TH2B onto the nucleosomes, thereby promoting the replacement of histones to protamine in male germ cells. This chain is Nucleosome assembly protein 1-like 4 (Nap1l4), found in Mus musculus (Mouse).